The chain runs to 346 residues: GTP-binding RHO-like protein (346 aa).

Residues 1-10 (MTPNGSRRHS) show a composition bias toward basic residues. A disordered region spans residues 1–25 (MTPNGSRRHSAYMGSPRSQHSSTME). The segment covering 16-25 (PRSQHSSTME) has biased composition (polar residues). 82–89 (GDGGCGKT) serves as a coordination point for GTP. The Effector region motif lies at 104-112 (YVPTVFENY). GTP contacts are provided by residues 130 to 134 (DTAGQ) and 188 to 191 (TKSD). A disordered region spans residues 259 to 294 (LGGSNGGSGNHSRHHSRNYSNVSNNRRGHLKNTSYD). Position 343 is a cysteine methyl ester (C343). A lipid anchor (S-geranylgeranyl cysteine) is attached at C343. Residues 344–346 (VIL) constitute a propeptide, removed in mature form.

Belongs to the small GTPase superfamily. Rho family.

It localises to the cell membrane. This chain is GTP-binding RHO-like protein (CRL1), found in Candida albicans (strain WO-1) (Yeast).